The sequence spans 180 residues: Oligoribonuclease (180 aa).

The region spanning 7–170 is the Exonuclease domain; that stretch reads LIWIDLEMTG…DDIRESIAEL (164 aa). Tyr128 is a catalytic residue.

The protein belongs to the oligoribonuclease family.

It is found in the cytoplasm. Its function is as follows. 3'-to-5' exoribonuclease specific for small oligoribonucleotides. In Pseudomonas entomophila (strain L48), this protein is Oligoribonuclease.